A 77-amino-acid chain; its full sequence is Putative defensin-like protein 185 (77 aa).

Residues 1–22 (MKNSSILLLLVVFFVISSSGEA) form the signal peptide. Disulfide bonds link Cys-25/Cys-77, Cys-31/Cys-54, Cys-40/Cys-71, and Cys-44/Cys-73.

Belongs to the DEFL family.

The protein localises to the secreted. The chain is Putative defensin-like protein 185 (LCR39) from Arabidopsis thaliana (Mouse-ear cress).